The primary structure comprises 117 residues: Large ribosomal subunit protein bL20 (117 aa).

The protein belongs to the bacterial ribosomal protein bL20 family.

Binds directly to 23S ribosomal RNA and is necessary for the in vitro assembly process of the 50S ribosomal subunit. It is not involved in the protein synthesizing functions of that subunit. This chain is Large ribosomal subunit protein bL20, found in Lawsonia intracellularis (strain PHE/MN1-00).